We begin with the raw amino-acid sequence, 316 residues long: Methionyl-tRNA formyltransferase (316 aa).

108 to 111 (SLLP) lines the (6S)-5,6,7,8-tetrahydrofolate pocket.

Belongs to the Fmt family.

The enzyme catalyses L-methionyl-tRNA(fMet) + (6R)-10-formyltetrahydrofolate = N-formyl-L-methionyl-tRNA(fMet) + (6S)-5,6,7,8-tetrahydrofolate + H(+). Functionally, attaches a formyl group to the free amino group of methionyl-tRNA(fMet). The formyl group appears to play a dual role in the initiator identity of N-formylmethionyl-tRNA by promoting its recognition by IF2 and preventing the misappropriation of this tRNA by the elongation apparatus. This chain is Methionyl-tRNA formyltransferase, found in Heliobacterium modesticaldum (strain ATCC 51547 / Ice1).